Reading from the N-terminus, the 544-residue chain is Chaperonin GroEL (544 aa).

Residues 30–33, 87–91, Gly-414, 478–480, and Asp-494 contribute to the ATP site; these read TLGP, DGTTT, and NAL.

The protein belongs to the chaperonin (HSP60) family. In terms of assembly, forms a cylinder of 14 subunits composed of two heptameric rings stacked back-to-back. Interacts with the co-chaperonin GroES.

It localises to the cytoplasm. It catalyses the reaction ATP + H2O + a folded polypeptide = ADP + phosphate + an unfolded polypeptide.. In terms of biological role, together with its co-chaperonin GroES, plays an essential role in assisting protein folding. The GroEL-GroES system forms a nano-cage that allows encapsulation of the non-native substrate proteins and provides a physical environment optimized to promote and accelerate protein folding. This Pelotomaculum thermopropionicum (strain DSM 13744 / JCM 10971 / SI) protein is Chaperonin GroEL.